Consider the following 173-residue polypeptide: Small ribosomal subunit protein uS5 (173 aa).

One can recognise an S5 DRBM domain in the interval 16-79 (LSELLVSVRR…NAAKKNMIRV (64 aa)).

This sequence belongs to the universal ribosomal protein uS5 family. Part of the 30S ribosomal subunit. Contacts proteins S4 and S8.

Functionally, with S4 and S12 plays an important role in translational accuracy. In terms of biological role, located at the back of the 30S subunit body where it stabilizes the conformation of the head with respect to the body. The sequence is that of Small ribosomal subunit protein uS5 from Anaplasma phagocytophilum (strain HZ).